A 258-amino-acid polypeptide reads, in one-letter code: Large ribosomal subunit protein uL5c (258 aa).

A chloroplast-targeting transit peptide spans 1–38 (MASTSLLQSTSSSFAGVRFHCRTSAAPRVGLSSFTVKA).

Component of the chloroplast large ribosomal subunit (LSU). Mature 70S chloroplast ribosomes of higher plants consist of a small (30S) and a large (50S) subunit. The 30S small subunit contains 1 molecule of ribosomal RNA (16S rRNA) and 24 different proteins. The 50S large subunit contains 3 rRNA molecules (23S, 5S and 4.5S rRNA) and 33 different proteins.

It localises to the plastid. The protein resides in the chloroplast. In terms of biological role, component of the chloroplast ribosome (chloro-ribosome), a dedicated translation machinery responsible for the synthesis of chloroplast genome-encoded proteins, including proteins of the transcription and translation machinery and components of the photosynthetic apparatus. This chain is Large ribosomal subunit protein uL5c (RPL5), found in Spinacia oleracea (Spinach).